Consider the following 351-residue polypeptide: Ferrochelatase (351 aa).

Fe cation is bound by residues His221 and Glu302.

It belongs to the ferrochelatase family.

It localises to the cytoplasm. It catalyses the reaction heme b + 2 H(+) = protoporphyrin IX + Fe(2+). It functions in the pathway porphyrin-containing compound metabolism; protoheme biosynthesis; protoheme from protoporphyrin-IX: step 1/1. Functionally, catalyzes the ferrous insertion into protoporphyrin IX. The sequence is that of Ferrochelatase from Bradyrhizobium sp. (strain BTAi1 / ATCC BAA-1182).